The following is a 23-amino-acid chain: Hongotoxin-4 (23 aa).

This sequence belongs to the short scorpion toxin superfamily. Potassium channel inhibitor family. Alpha-KTx 02 subfamily. Expressed by the venom gland.

Its subcellular location is the secreted. Its function is as follows. Potent selective inhibitor of Kv1/KCNA voltage-gated potassium channels. In Centruroides limbatus (Bark scorpion), this protein is Hongotoxin-4.